A 377-amino-acid chain; its full sequence is Iris (377 aa).

Residues N11 and N226 are each glycosylated (N-linked (GlcNAc...) asparagine).

This sequence belongs to the serpin family. In terms of tissue distribution, female saliva (at protein level). Female salivary gland (at protein level).

It is found in the secreted. Serine protease inhibitor with anticoagulant and immunosuppressive properties that can modulate blood feeding of ticks on vertebrate species. Strongly inhibits human leukocyte elastase (ELANE) and porcine pancreatic elastase. Moderately inhibits human tPA/tissue-type plasminogen activator (PLAT), coagulation factor Xa (F10), thrombin (F2) and trypsin. Does not inhibit human plasmin (PLG). Inhibits platelet aggregation. Inhibits the intrinsic pathway of blood coagulation in the host. Inhibits fibrinolysis in the host. Inhibits proliferation of mouse splenocytes. Decreases the number of IFN-gamma (IFNG)-producing human peripheral blood mononuclear cells (PBMCs) after stimulation with phytohemagglutinin A (PHA). Increases the number of IL10-producing human PBMCs after stimulation with lipopolysaccharides (LPS) with no significant effect on IL10 production. Inhibits production of IFNG, IL6, TNF-alpha (TNF) and CXCL8 by human PBMCs. Binds to monocyte/macrophage subpopulation of the host PBMCs. Increases both survival rate and survival time in mice with LPS-induced endotoxemic shock. The protein is Iris of Ixodes ricinus (Common tick).